The chain runs to 234 residues: Sugar fermentation stimulation protein A (234 aa).

Positions 201 to 220 (LLSEAQNKGVEVLAYKAELS) form a DNA-binding region, H-T-H motif.

Belongs to the SfsA family.

Its function is as follows. Binds to DNA non-specifically. Could be a regulatory factor involved in maltose metabolism. The chain is Sugar fermentation stimulation protein A from Salmonella arizonae (strain ATCC BAA-731 / CDC346-86 / RSK2980).